The chain runs to 196 residues: Venom platylysin (196 aa).

This sequence belongs to the redulysin-like family. In terms of tissue distribution, expressed by the venom gland.

The protein resides in the secreted. Its function is as follows. Probable insecticidal toxin that has been detected in a semi-pure insecticidal fraction. The sequence is that of Venom platylysin from Platymeris biguttatus (Two-spotted assassin bug).